Here is a 447-residue protein sequence, read N- to C-terminus: Rab GDP dissociation inhibitor alpha (447 aa).

S427 bears the Phosphoserine mark.

Belongs to the Rab GDI family. In terms of assembly, interacts with RHOH. Interacts with the non-phosphorylated forms of RAB1A, RAB3A, RAB5A, RAB5B, RAB5C, RAB8A, RAB8B, RAB10, RAB12, RAB35, and RAB43. As to expression, high expression in brain, lower in other tissues.

Its subcellular location is the cytoplasm. The protein resides in the golgi apparatus. It localises to the trans-Golgi network. Regulates the GDP/GTP exchange reaction of most Rab proteins by inhibiting the dissociation of GDP from them, and the subsequent binding of GTP to them. Promotes the dissociation of GDP-bound Rab proteins from the membrane and inhibits their activation. Promotes the dissociation of RAB1A, RAB3A, RAB5A and RAB10 from membranes. The sequence is that of Rab GDP dissociation inhibitor alpha (Gdi1) from Rattus norvegicus (Rat).